The primary structure comprises 118 residues: Small ribosomal subunit protein uS13 (118 aa).

The disordered stretch occupies residues 94–118 (SLPVRGQRTKTNARTRKGPRKAIKK).

The protein belongs to the universal ribosomal protein uS13 family. In terms of assembly, part of the 30S ribosomal subunit. Forms a loose heterodimer with protein S19. Forms two bridges to the 50S subunit in the 70S ribosome.

Its function is as follows. Located at the top of the head of the 30S subunit, it contacts several helices of the 16S rRNA. In the 70S ribosome it contacts the 23S rRNA (bridge B1a) and protein L5 of the 50S subunit (bridge B1b), connecting the 2 subunits; these bridges are implicated in subunit movement. Contacts the tRNAs in the A and P-sites. In Aeromonas hydrophila subsp. hydrophila (strain ATCC 7966 / DSM 30187 / BCRC 13018 / CCUG 14551 / JCM 1027 / KCTC 2358 / NCIMB 9240 / NCTC 8049), this protein is Small ribosomal subunit protein uS13.